A 90-amino-acid polypeptide reads, in one-letter code: Probable Fe(2+)-trafficking protein (90 aa).

It belongs to the Fe(2+)-trafficking protein family.

In terms of biological role, could be a mediator in iron transactions between iron acquisition and iron-requiring processes, such as synthesis and/or repair of Fe-S clusters in biosynthetic enzymes. This Nitrosomonas europaea (strain ATCC 19718 / CIP 103999 / KCTC 2705 / NBRC 14298) protein is Probable Fe(2+)-trafficking protein.